The sequence spans 95 residues: Large ribosomal subunit protein uL23 (95 aa).

It belongs to the universal ribosomal protein uL23 family. Part of the 50S ribosomal subunit. Contacts protein L29, and trigger factor when it is bound to the ribosome.

Its function is as follows. One of the early assembly proteins it binds 23S rRNA. One of the proteins that surrounds the polypeptide exit tunnel on the outside of the ribosome. Forms the main docking site for trigger factor binding to the ribosome. In Leuconostoc mesenteroides subsp. mesenteroides (strain ATCC 8293 / DSM 20343 / BCRC 11652 / CCM 1803 / JCM 6124 / NCDO 523 / NBRC 100496 / NCIMB 8023 / NCTC 12954 / NRRL B-1118 / 37Y), this protein is Large ribosomal subunit protein uL23.